The primary structure comprises 172 residues: Adenine phosphoribosyltransferase (172 aa).

It belongs to the purine/pyrimidine phosphoribosyltransferase family. In terms of assembly, homodimer.

The protein localises to the cytoplasm. It carries out the reaction AMP + diphosphate = 5-phospho-alpha-D-ribose 1-diphosphate + adenine. The protein operates within purine metabolism; AMP biosynthesis via salvage pathway; AMP from adenine: step 1/1. Its function is as follows. Catalyzes a salvage reaction resulting in the formation of AMP, that is energically less costly than de novo synthesis. In Synechococcus sp. (strain CC9311), this protein is Adenine phosphoribosyltransferase.